The primary structure comprises 225 residues: ATP-dependent Clp protease proteolytic subunit (225 aa).

Serine 123 acts as the Nucleophile in catalysis. The active site involves histidine 148.

This sequence belongs to the peptidase S14 family. Fourteen ClpP subunits assemble into 2 heptameric rings which stack back to back to give a disk-like structure with a central cavity, resembling the structure of eukaryotic proteasomes.

It localises to the cytoplasm. It carries out the reaction Hydrolysis of proteins to small peptides in the presence of ATP and magnesium. alpha-casein is the usual test substrate. In the absence of ATP, only oligopeptides shorter than five residues are hydrolyzed (such as succinyl-Leu-Tyr-|-NHMec, and Leu-Tyr-Leu-|-Tyr-Trp, in which cleavage of the -Tyr-|-Leu- and -Tyr-|-Trp bonds also occurs).. Functionally, cleaves peptides in various proteins in a process that requires ATP hydrolysis. Has a chymotrypsin-like activity. Plays a major role in the degradation of misfolded proteins. This Chlorobium chlorochromatii (strain CaD3) protein is ATP-dependent Clp protease proteolytic subunit.